We begin with the raw amino-acid sequence, 292 residues long: Ribosomal protein L11 methyltransferase (292 aa).

Residues Thr138, Gly159, Asp181, and Asn225 each contribute to the S-adenosyl-L-methionine site.

This sequence belongs to the methyltransferase superfamily. PrmA family.

It localises to the cytoplasm. The catalysed reaction is L-lysyl-[protein] + 3 S-adenosyl-L-methionine = N(6),N(6),N(6)-trimethyl-L-lysyl-[protein] + 3 S-adenosyl-L-homocysteine + 3 H(+). Its function is as follows. Methylates ribosomal protein L11. The polypeptide is Ribosomal protein L11 methyltransferase (Leuconostoc citreum (strain KM20)).